A 376-amino-acid polypeptide reads, in one-letter code: Lateral eye opsin (376 aa).

Over 1 to 46 the chain is Extracellular; that stretch reads MANQLSYSSLGWPYQPNASVVDTMPKEMLYMIHEHWYAFPPMNPLW. Asparagine 17 carries N-linked (GlcNAc...) asparagine glycosylation. A helical membrane pass occupies residues 47–71; sequence YSILGVAMIILGIICVLGNGMVIYL. Over 72 to 83 the chain is Cytoplasmic; the sequence is MMTTKSLRTPTN. Residues 84–108 form a helical membrane-spanning segment; the sequence is LLVVNLAFSDFCMMAFMMPTMTSNC. Over 109 to 123 the chain is Extracellular; sequence FAETWILGPFMCEVY. Cysteine 120 and cysteine 197 are oxidised to a cystine. A helical transmembrane segment spans residues 124–143; sequence GMAGSLFGCASIWSMVMITL. The Cytoplasmic segment spans residues 144–162; sequence DRYNVIVRGMAAAPLTHKK. A helical membrane pass occupies residues 163–186; the sequence is ATLLLLFVWIWSGGWTILPFFGWS. The Extracellular portion of the chain corresponds to 187 to 210; it reads RYVPEGNLTSCTVDYLTKDWSSAS. N-linked (GlcNAc...) asparagine glycosylation is present at asparagine 193. A helical membrane pass occupies residues 211–238; sequence YVVIYGLAVYFLPLITMIYCYFFIVHAV. Residues 239 to 274 are Cytoplasmic-facing; sequence AEHEKQLREQAKKMNVASLRANADQQKQSAECRLAK. The chain crosses the membrane as a helical span at residues 275 to 298; sequence VAMMTVGLWFMAWTPYLIISWAGV. Residues 299 to 306 are Extracellular-facing; the sequence is FSSGTRLT. A helical transmembrane segment spans residues 307–331; that stretch reads PLATIWGSVFAKANSCYNPIVYGIS. Lysine 318 is subject to N6-(retinylidene)lysine. Residues 332–376 lie on the Cytoplasmic side of the membrane; sequence HPRYKAALYQRFPSLACGSGESGSDVKSEASATTTMEEKPKIPEA. The segment at 349–376 is disordered; it reads GSGESGSDVKSEASATTTMEEKPKIPEA. Basic and acidic residues predominate over residues 367 to 376; sequence MEEKPKIPEA.

Belongs to the G-protein coupled receptor 1 family. Opsin subfamily. In terms of processing, phosphorylated on some or all of the serine and threonine residues present in the C-terminal region. Lateral eye.

Its subcellular location is the membrane. In terms of biological role, visual pigments are the light-absorbing molecules that mediate vision. They consist of an apoprotein, opsin, covalently linked to cis-retinal. This is Lateral eye opsin from Limulus polyphemus (Atlantic horseshoe crab).